The sequence spans 773 residues: FT-interacting protein 3 (773 aa).

Residues 1-16 (MQRPPPEDFSLKETRP) show a composition bias toward basic and acidic residues. The tract at residues 1 to 24 (MQRPPPEDFSLKETRPHLGGGKLS) is disordered. 3 consecutive C2 domains span residues 22-142 (KLSG…PQWY), 181-305 (VSGT…SRWY), and 345-471 (YSSD…THSY). Positions 55, 61, 108, 110, and 115 each coordinate Ca(2+). 3 helical membrane-spanning segments follow: residues 574–594 (IMGV…ICNW), 608–628 (IILV…LFLI), and 716–736 (LFVL…FQVV).

It belongs to the MCTP family. In terms of assembly, interacts with and regulates subcellular localization and trafficking of STM. The cofactor is Ca(2+). In terms of tissue distribution, accumulates in vascular tissues, leaf primordia and flowers. Highly expressed in roots meristems and in both vegetative and inflorescence shoot apical meristems (SAMs).

It localises to the endoplasmic reticulum membrane. It is found in the cytoplasm. Its subcellular location is the vesicle. The protein resides in the cell membrane. The protein localises to the endosome membrane. It localises to the golgi apparatus membrane. Its function is as follows. Required for proliferation and differentiation of shoot stem cells in the shoot apical meristem (SAM), thus determining the appropriate balance between the maintenance of shoot stem cells and their differentiation into other aboveground plant parts via the control of subcellular localization and intercellular trafficking of STM in the shoot apex. Prevents intracellular trafficking of STM to the plasma membrane in cells in the peripheral shoot meristem region thus facilitating STM recycling to the nucleus to maintain stem cells. May function as a signaling molecule by regulating the trafficking of other regulators. The chain is FT-interacting protein 3 from Arabidopsis thaliana (Mouse-ear cress).